A 370-amino-acid polypeptide reads, in one-letter code: Chloromuconate cycloisomerase (370 aa).

The Proton acceptor role is filled by Lys-165. The Mn(2+) site is built by Asp-194, Glu-220, and Asp-245. Residue Glu-323 is the Proton donor of the active site.

This sequence belongs to the mandelate racemase/muconate lactonizing enzyme family. Mn(2+) serves as cofactor.

It carries out the reaction 2-[(2R)-2-chloro-2,5-dihydro-5-oxofuryl]acetate = 3-chloro-cis,cis-muconate + H(+). The protein operates within aromatic compound metabolism; 3-chlorocatechol degradation. The chain is Chloromuconate cycloisomerase (tfdDI) from Cupriavidus pinatubonensis (strain JMP 134 / LMG 1197) (Cupriavidus necator (strain JMP 134)).